The chain runs to 630 residues: DNA mismatch repair protein MutL (630 aa).

The span at 398–408 (TQTNAFGSMAT) shows a compositional bias: polar residues. Residues 398 to 425 (TQTNAFGSMATSRDSSRGSYSASESRQR) form a disordered region.

This sequence belongs to the DNA mismatch repair MutL/HexB family.

Its function is as follows. This protein is involved in the repair of mismatches in DNA. It is required for dam-dependent methyl-directed DNA mismatch repair. May act as a 'molecular matchmaker', a protein that promotes the formation of a stable complex between two or more DNA-binding proteins in an ATP-dependent manner without itself being part of a final effector complex. The sequence is that of DNA mismatch repair protein MutL from Shewanella baltica (strain OS185).